Consider the following 279-residue polypeptide: Shikimate dehydrogenase (NADP(+)) (279 aa).

Residues 17–19 (SQS) and Thr-64 contribute to the shikimate site. Lys-68 (proton acceptor) is an active-site residue. Shikimate-binding residues include Asn-89 and Asp-105. Residues 130-134 (GAGGA) and Leu-218 contribute to the NADP(+) site. Residue Tyr-220 coordinates shikimate. Gly-242 lines the NADP(+) pocket.

Belongs to the shikimate dehydrogenase family. In terms of assembly, homodimer.

The catalysed reaction is shikimate + NADP(+) = 3-dehydroshikimate + NADPH + H(+). The protein operates within metabolic intermediate biosynthesis; chorismate biosynthesis; chorismate from D-erythrose 4-phosphate and phosphoenolpyruvate: step 4/7. Its function is as follows. Involved in the biosynthesis of the chorismate, which leads to the biosynthesis of aromatic amino acids. Catalyzes the reversible NADPH linked reduction of 3-dehydroshikimate (DHSA) to yield shikimate (SA). The sequence is that of Shikimate dehydrogenase (NADP(+)) from Methylococcus capsulatus (strain ATCC 33009 / NCIMB 11132 / Bath).